The primary structure comprises 149 residues: Transcription factor HY5-like (149 aa).

Positions 1–77 are disordered; that stretch reads MSLQRPNGNS…RRRGRNPVDK (77 aa). The interaction with COP1 stretch occupies residues 23-36; it reads ESDEELLMVPDMEA. Position 24 is a phosphoserine (S24). Residues 55 to 64 are compositionally biased toward polar residues; that stretch reads ELDQTQNGVS. The region spanning 78 to 141 is the bZIP domain; sequence EYRSLKRLLR…TMLRKMLINT (64 aa). Positions 80–100 are basic motif; it reads RSLKRLLRNRVSAQQARERKK. A leucine-zipper region spans residues 106-134; the sequence is LESRANELQNNNDQLEEKISTLTNENTML.

This sequence belongs to the bZIP family. In terms of assembly, heterodimer; heterodimerizes with HY5 via the leucine-zipper domains. Interacts with COP1 WD40 domain. Interacts with BBX24/STO and BBX25/STH. Post-translationally, ubiquitinated by COP1. Ubiquitination takes place in darkness and leads to its subsequent degradation, thereby preventing the activation of photomorphogenesis signals.

Its subcellular location is the nucleus. Its function is as follows. Transcription factor that promotes photomorphogenesis in light. Acts downstream of the light receptor network and directly affects transcription of light-induced genes. Specifically involved in the blue light specific pathway, suggesting that it participates in transmission of cryptochromes (CRY1 and CRY2) signals to downstream responses. In darkness, its degradation prevents the activation of light-induced genes. This chain is Transcription factor HY5-like (HYH), found in Arabidopsis thaliana (Mouse-ear cress).